Consider the following 169-residue polypeptide: MPLLDSFTVDHTRMNAPAVRVAKHMTTPKGDAITVFDLRFCAPNKDILSERGIHTLEHLFAGFMRDHLNGDDVEIIDISPMGCRTGFYMSLIGVPTERQVADAWLASMEDVLKVVEQSEIPELNEYQCGTYEMHSLEQAQDIARNIIAAGVSVNRNDDLKLSDEILGKL.

3 residues coordinate Fe cation: His-54, His-58, and Cys-128.

It belongs to the LuxS family. Homodimer. The cofactor is Fe cation.

It catalyses the reaction S-(5-deoxy-D-ribos-5-yl)-L-homocysteine = (S)-4,5-dihydroxypentane-2,3-dione + L-homocysteine. Involved in the synthesis of autoinducer 2 (AI-2) which is secreted by bacteria and is used to communicate both the cell density and the metabolic potential of the environment. The regulation of gene expression in response to changes in cell density is called quorum sensing. Catalyzes the transformation of S-ribosylhomocysteine (RHC) to homocysteine (HC) and 4,5-dihydroxy-2,3-pentadione (DPD). The chain is S-ribosylhomocysteine lyase from Shewanella oneidensis (strain ATCC 700550 / JCM 31522 / CIP 106686 / LMG 19005 / NCIMB 14063 / MR-1).